The primary structure comprises 206 residues: Small ribosomal subunit protein uS4 (206 aa).

An S4 RNA-binding domain is found at 96 to 156; it reads TRLDNVVYRM…EKSKTQARII (61 aa).

Belongs to the universal ribosomal protein uS4 family. Part of the 30S ribosomal subunit. Contacts protein S5. The interaction surface between S4 and S5 is involved in control of translational fidelity.

One of the primary rRNA binding proteins, it binds directly to 16S rRNA where it nucleates assembly of the body of the 30S subunit. Functionally, with S5 and S12 plays an important role in translational accuracy. This chain is Small ribosomal subunit protein uS4, found in Colwellia psychrerythraea (strain 34H / ATCC BAA-681) (Vibrio psychroerythus).